The following is a 123-amino-acid chain: NADH-quinone oxidoreductase subunit A (123 aa).

3 helical membrane-spanning segments follow: residues 11–31 (YLPIAIFFGIAVLVSGLIMIL), 64–84 (ICFYLVAILFIIFDLEIAFLV), and 93–113 (IGKIGFFSMMFFLFVLIIGFI).

It belongs to the complex I subunit 3 family. As to quaternary structure, NDH-1 is composed of 14 different subunits. Subunits NuoA, H, J, K, L, M, N constitute the membrane sector of the complex.

The protein localises to the cell inner membrane. It catalyses the reaction a quinone + NADH + 5 H(+)(in) = a quinol + NAD(+) + 4 H(+)(out). NDH-1 shuttles electrons from NADH, via FMN and iron-sulfur (Fe-S) centers, to quinones in the respiratory chain. The immediate electron acceptor for the enzyme in this species is believed to be ubiquinone. Couples the redox reaction to proton translocation (for every two electrons transferred, four hydrogen ions are translocated across the cytoplasmic membrane), and thus conserves the redox energy in a proton gradient. This Rickettsia conorii (strain ATCC VR-613 / Malish 7) protein is NADH-quinone oxidoreductase subunit A.